The sequence spans 187 residues: Large ribosomal subunit protein uL5 (187 aa).

Belongs to the universal ribosomal protein uL5 family. As to quaternary structure, part of the 50S ribosomal subunit; part of the 5S rRNA/L5/L18/L25 subcomplex. Contacts the 5S rRNA and the P site tRNA. Forms a bridge to the 30S subunit in the 70S ribosome.

In terms of biological role, this is one of the proteins that bind and probably mediate the attachment of the 5S RNA into the large ribosomal subunit, where it forms part of the central protuberance. In the 70S ribosome it contacts protein S13 of the 30S subunit (bridge B1b), connecting the 2 subunits; this bridge is implicated in subunit movement. Contacts the P site tRNA; the 5S rRNA and some of its associated proteins might help stabilize positioning of ribosome-bound tRNAs. The polypeptide is Large ribosomal subunit protein uL5 (Corynebacterium diphtheriae (strain ATCC 700971 / NCTC 13129 / Biotype gravis)).